A 200-amino-acid chain; its full sequence is Thymidine kinase (200 aa).

Residues 15–22 (GSMFSGKS) and 88–91 (DEVQ) each bind ATP. Glu-89 serves as the catalytic Proton acceptor. Residues Cys-145, Cys-148, Cys-183, and His-186 each contribute to the Zn(2+) site.

Belongs to the thymidine kinase family. Homotetramer.

The protein localises to the cytoplasm. The catalysed reaction is thymidine + ATP = dTMP + ADP + H(+). The sequence is that of Thymidine kinase from Bacillus pumilus (strain SAFR-032).